A 591-amino-acid chain; its full sequence is Oxaloacetate decarboxylase alpha chain (591 aa).

A Pyruvate carboxyltransferase domain is found at 3–263 (IAITDVVLRD…DTGLDILKLE (261 aa)). Residues 518 to 591 (PAGAGTPVTA…SVGDTLMTLA (74 aa)) form the Biotinyl-binding domain. Lys-557 bears the N6-biotinyllysine mark.

In terms of assembly, composed of three chains (alpha, beta, and gamma). The cofactor is biotin.

The catalysed reaction is oxaloacetate + 2 Na(+)(in) + H(+) = pyruvate + 2 Na(+)(out) + CO2. In terms of biological role, catalyzes the decarboxylation of oxaloacetate coupled to Na(+) translocation. This is Oxaloacetate decarboxylase alpha chain (oadA1) from Salmonella typhi.